Reading from the N-terminus, the 496-residue chain is Probable CtpA-like serine protease (496 aa).

The span at 1–16 shows a compositional bias: basic and acidic residues; sequence MDDKQHTSSSDDERAE. The segment at 1–27 is disordered; the sequence is MDDKQHTSSSDDERAEIATSNQDQQTN. The segment covering 18-27 has biased composition (polar residues); the sequence is ATSNQDQQTN. A helical transmembrane segment spans residues 39 to 59; sequence FISILIGTILITAVITVVAYI. The 83-residue stretch at 124–206 folds into the PDZ domain; it reads TKSFNEGVSG…TEVTLTVQRG (83 aa). Catalysis depends on charge relay system residues Ser-329, Asp-340, and Lys-354.

It belongs to the peptidase S41A family.

It is found in the cell membrane. In Staphylococcus aureus (strain bovine RF122 / ET3-1), this protein is Probable CtpA-like serine protease.